Reading from the N-terminus, the 122-residue chain is S-adenosylmethionine decarboxylase proenzyme (122 aa).

The active-site Schiff-base intermediate with substrate; via pyruvic acid is the S61. Position 61 is a pyruvic acid (Ser); by autocatalysis (S61). H66 (proton acceptor; for processing activity) is an active-site residue. The active-site Proton donor; for catalytic activity is the C81.

The protein belongs to the prokaryotic AdoMetDC family. Type 1 subfamily. In terms of assembly, heterotetramer of two alpha and two beta chains arranged as a dimer of alpha/beta heterodimers. It depends on pyruvate as a cofactor. In terms of processing, is synthesized initially as an inactive proenzyme. Formation of the active enzyme involves a self-maturation process in which the active site pyruvoyl group is generated from an internal serine residue via an autocatalytic post-translational modification. Two non-identical subunits are generated from the proenzyme in this reaction, and the pyruvate is formed at the N-terminus of the alpha chain, which is derived from the carboxyl end of the proenzyme. The post-translation cleavage follows an unusual pathway, termed non-hydrolytic serinolysis, in which the side chain hydroxyl group of the serine supplies its oxygen atom to form the C-terminus of the beta chain, while the remainder of the serine residue undergoes an oxidative deamination to produce ammonia and the pyruvoyl group blocking the N-terminus of the alpha chain.

The enzyme catalyses S-adenosyl-L-methionine + H(+) = S-adenosyl 3-(methylsulfanyl)propylamine + CO2. It functions in the pathway amine and polyamine biosynthesis; S-adenosylmethioninamine biosynthesis; S-adenosylmethioninamine from S-adenosyl-L-methionine: step 1/1. In terms of biological role, catalyzes the decarboxylation of S-adenosylmethionine to S-adenosylmethioninamine (dcAdoMet), the propylamine donor required for the synthesis of the polyamines spermine and spermidine from the diamine putrescine. This is S-adenosylmethionine decarboxylase proenzyme from Prochlorococcus marinus (strain MIT 9211).